Here is a 119-residue protein sequence, read N- to C-terminus: Protein TusC (119 aa).

The protein belongs to the DsrF/TusC family. As to quaternary structure, heterohexamer, formed by a dimer of trimers. The hexameric TusBCD complex contains 2 copies each of TusB, TusC and TusD. The TusBCD complex interacts with TusE.

Its subcellular location is the cytoplasm. In terms of biological role, part of a sulfur-relay system required for 2-thiolation of 5-methylaminomethyl-2-thiouridine (mnm(5)s(2)U) at tRNA wobble positions. The sequence is that of Protein TusC from Klebsiella pneumoniae (strain 342).